A 156-amino-acid chain; its full sequence is Small ribosomal subunit protein uS7 (156 aa).

The protein belongs to the universal ribosomal protein uS7 family. Part of the 30S ribosomal subunit. Contacts proteins S9 and S11.

One of the primary rRNA binding proteins, it binds directly to 16S rRNA where it nucleates assembly of the head domain of the 30S subunit. Is located at the subunit interface close to the decoding center, probably blocks exit of the E-site tRNA. The protein is Small ribosomal subunit protein uS7 of Geotalea uraniireducens (strain Rf4) (Geobacter uraniireducens).